The following is a 146-amino-acid chain: D-aminoacyl-tRNA deacylase (146 aa).

The Gly-cisPro motif, important for rejection of L-amino acids signature appears at Gly-138–Pro-139.

It belongs to the DTD family. In terms of assembly, homodimer.

Its subcellular location is the cytoplasm. The enzyme catalyses glycyl-tRNA(Ala) + H2O = tRNA(Ala) + glycine + H(+). The catalysed reaction is a D-aminoacyl-tRNA + H2O = a tRNA + a D-alpha-amino acid + H(+). An aminoacyl-tRNA editing enzyme that deacylates mischarged D-aminoacyl-tRNAs. Also deacylates mischarged glycyl-tRNA(Ala), protecting cells against glycine mischarging by AlaRS. Acts via tRNA-based rather than protein-based catalysis; rejects L-amino acids rather than detecting D-amino acids in the active site. By recycling D-aminoacyl-tRNA to D-amino acids and free tRNA molecules, this enzyme counteracts the toxicity associated with the formation of D-aminoacyl-tRNA entities in vivo and helps enforce protein L-homochirality. In Xanthomonas axonopodis pv. citri (strain 306), this protein is D-aminoacyl-tRNA deacylase.